Here is a 461-residue protein sequence, read N- to C-terminus: Coronin-1A (461 aa).

Serine 2 is modified (N-acetylserine). At serine 2 the chain carries Phosphoserine; by PKC. WD repeat units lie at residues 13-63, 73-110, 123-160, 164-204, 207-251, 258-296, and 302-349; these read HVFG…LVLP, NVPLVCGHTAPVLDIAWCPHNDNVIASGSEDCTVMVWE, PVITLEGHTKRVGIVAWHPTAQNVLLSAGCDNVILVWD, GAAV…RVIE, KGTV…ALWD, PLSLQELDTSSGVLLPFFDPDTNIVYLCGKGDSSIRYFE, and PFLH…EPIA. The segment covering 403–418 has biased composition (basic and acidic residues); it reads ELRVNRGLDSARRRAT. The tract at residues 403–434 is disordered; sequence ELRVNRGLDSARRRATPEPSGTPSSDTVSRLE. Serine 412 carries the phosphoserine; by PKC modification. A Phosphothreonine modification is found at threonine 418. A compositionally biased stretch (polar residues) spans 421 to 430; that stretch reads PSGTPSSDTV. Serine 422 carries the post-translational modification Phosphoserine. The stretch at 424–461 forms a coiled coil; the sequence is TPSSDTVSRLEEDVRNLNAIVQKLQERLDRLEETVQAK.

This sequence belongs to the WD repeat coronin family. As to quaternary structure, binds actin. In terms of processing, phosphorylation at Ser-412 by PKC strongly down-regulates the association with actin. Polyubiquitinated by RNF128 with 'Lys-48'-linked chains, leading to proteasomal degradation. As to expression, expressed in spleen, lymph nodes, thymus, brain and at very lower levels in lung. Also expressed in cells of the lymphoid/myeloid lineage. Not expressed in Kuffper cells.

The protein localises to the cytoplasm. Its subcellular location is the cytoskeleton. It localises to the cell cortex. The protein resides in the cytoplasmic vesicle. It is found in the phagosome membrane. Functionally, may be a crucial component of the cytoskeleton of highly motile cells, functioning both in the invagination of large pieces of plasma membrane, as well as in forming protrusions of the plasma membrane involved in cell locomotion. In mycobacteria-infected cells, its retention on the phagosomal membrane prevents fusion between phagosomes and lysosomes. The protein is Coronin-1A (Coro1a) of Mus musculus (Mouse).